The primary structure comprises 739 residues: MATLPAEPSAGPAAGGEAVAAAAATEEEEEEARQLLQTLQAAEGEAAAAAGAGAGAAAAGAEGPGSPGVPGSPPEAASEPPTGLRFSPEQVACVCEALLQAGHAGRLSRFLGALPPAERLRGSDPVLRARALVAFQRGEYAELYRLLESRPFPAAHHAFLQDLYLRARYHEAERARGRALGAVDKYRLRKKFPLPKTIWDGEETVYCFKERSRAALKACYRGNRYPTPDEKRRLATLTGLSLTQVSNWFKNRRQRDRTGAGGGAPCKSESDGNPTTEDESSRSPEDLERGAAPVSAEAAAQGSIFLAGTGPPAPCPASSSILVNGSFLAASGSPAVLLNGGPVIINGLALGEASSLGPLLLTGGGGAPPPQPSPQGASETKTSLVLDPQTGEVRLEEAQSEAPETKGAQVAAPGPALGEEVLGPLAQVVPGPPTAATFPLPPGPVPAVAAPQVVPLSPPPGYPTGLSPTSPLLNLPQVVPTSQVVTLPQAVGPLQLLAAGPGSPVKVAAAAGPANVHLINSGVGVTALQLPSATAPGNFLLANPVSGSPIVTGVALQQGKIILTATFPTSMLVSQVLPPAPGLALPLKPETAISVPEGGLPVAPSPALPEAHALGTLSAQQPPPAAATTSSTSLPFSPDSPGLLPNFPAPPPEGLMLSPAAVPVWSAGLELSAGTEGLLEAEKGLGTQAPHTVLRLPDPDPEGLLLGATAGGEVDEGLEAEAKVLTQLQSVPVEEPLEL.

Low complexity-rich tracts occupy residues 1–24 (MATLPAEPSAGPAAGGEAVAAAAA), 34–61 (QLLQTLQAAEGEAAAAAGAGAGAAAAGA), and 74–83 (PEAASEPPTG). Disordered stretches follow at residues 1–84 (MATL…PTGL), 251–294 (NRRQ…AAPV), 361–381 (LTGGGGAPPPQPSPQGASETK), and 617–650 (LSAQQPPPAAATTSSTSLPFSPDSPGLLPNFPAP). A DNA-binding region (homeobox) is located at residues 201 to 260 (GEETVYCFKERSRAALKACYRGNRYPTPDEKRRLATLTGLSLTQVSNWFKNRRQRDRTGA). A compositionally biased stretch (basic and acidic residues) spans 279–289 (ESSRSPEDLER). The span at 617–646 (LSAQQPPPAAATTSSTSLPFSPDSPGLLPN) shows a compositional bias: low complexity.

It belongs to the SIX/Sine oculis homeobox family. Probably binds DNA dimer. Interacts with EYA3, and probably EYA1 and EYA2. Expressed in adult but not in fetal eyes. Found in corneal epithelium and endothelium, lens epithelium, ciliary body epithelia, cellular layers of the retina and the sclera.

It localises to the cytoplasm. The protein resides in the nucleus. Its function is as follows. Transcription factor that is thought to be involved in regulation of organogenesis. May be involved in determination and maintenance of retina formation. Binds a 5'-GGTGTCAG-3' motif present in the ARE regulatory element of ATP1A1. Binds a 5'-TCA[AG][AG]TTNC-3' motif present in the MEF3 element in the myogenin promoter, and in the IGFBP5 promoter. Thought to be regulated by association with Dach and Eya proteins, and seems to be coactivated by EYA1, EYA2 and EYA3. This is Homeobox protein SIX5 (SIX5) from Homo sapiens (Human).